The primary structure comprises 154 residues: Basic phospholipase A2 PC20 (154 aa).

An N-terminal signal peptide occupies residues 1–21; the sequence is MYPAHLLVLLAVCVSLLGASA. Residues 22–27 constitute a propeptide that is removed on maturation; it reads ISPRPL. Cystine bridges form between C38–C98, C54–C143, C56–C72, C71–C125, C78–C118, C87–C111, and C105–C116. 3 residues coordinate Ca(2+): Y55, S57, and G59. The active site involves H75. A Ca(2+)-binding site is contributed by D76. D119 is a catalytic residue.

This sequence belongs to the phospholipase A2 family. Group I subfamily. D49 sub-subfamily. Requires Ca(2+) as cofactor. In terms of tissue distribution, expressed by the venom gland.

It localises to the secreted. The enzyme catalyses a 1,2-diacyl-sn-glycero-3-phosphocholine + H2O = a 1-acyl-sn-glycero-3-phosphocholine + a fatty acid + H(+). Functionally, snake venom phospholipase A2 (PLA2) that inhibits neuromuscular transmission by blocking acetylcholine release from the nerve termini. PLA2 catalyzes the calcium-dependent hydrolysis of the 2-acyl groups in 3-sn-phosphoglycerides. This Laticauda colubrina (Yellow-lipped sea krait) protein is Basic phospholipase A2 PC20.